The sequence spans 409 residues: Cdc42 effector protein 1 (409 aa).

The segment at 1-29 is disordered; that stretch reads MPGPQGGTGAPTMSLGKLSPVGWVSSSHG. Residues S19 and S27 each carry the phosphoserine modification. T34 carries the post-translational modification Phosphothreonine. The 15-residue stretch at 38-52 folds into the CRIB domain; the sequence is ISPPLGDFRHTMHVG. S39 carries the post-translational modification Phosphoserine. Residue R53 is modified to Omega-N-methylarginine. A phosphoserine mark is found at S65, S77, S101, S113, S121, and S139. Positions 167–189 are enriched in basic and acidic residues; the sequence is PRVEKHSNRDRDRDPDHSQDREQ. The interval 167–203 is disordered; it reads PRVEKHSNRDRDRDPDHSQDREQSSFPSEPTPNPELR. Phosphoserine occurs at positions 191, 205, 207, and 210. 3 repeat units span residues 235–241, 242–248, and 255–261. The segment at 235 to 284 is 3 X 7 AA tandem repeats of [PT]-[AT]-A-[ENT]-[PT]-[PTS]-[AG]; it reads PAAETPVPTANPPAPAANPAPTAKPPAHAITTLDAVTSLPASAVTSLPAP. Disordered stretches follow at residues 237–260 and 282–329; these read AETP…AKPP and PAPA…FDRH. Residues 243–258 show a composition bias toward pro residues; that stretch reads TANPPAPAANPAPTAK. The span at 282 to 291 shows a compositional bias: low complexity; that stretch reads PAPAAASSPS. Phosphoserine is present on residues S312, S332, S368, and S371.

This sequence belongs to the BORG/CEP family. As to quaternary structure, interacts with RHOQ and CDC42, in a GTP-dependent manner.

Its subcellular location is the endomembrane system. It is found in the cytoplasm. It localises to the cytoskeleton. Probably involved in the organization of the actin cytoskeleton. Induced membrane extensions in fibroblasts. The sequence is that of Cdc42 effector protein 1 (Cdc42ep1) from Mus musculus (Mouse).